The following is a 429-amino-acid chain: Bifunctional protein GlmU (429 aa).

The pyrophosphorylase stretch occupies residues 1–223 (MKTSILILAA…EDEFMGINDK (223 aa)). Residues 8-11 (LAAG), lysine 22, and 81-82 (GT) contribute to the UDP-N-acetyl-alpha-D-glucosamine site. Position 102 (aspartate 102) interacts with Mg(2+). UDP-N-acetyl-alpha-D-glucosamine is bound by residues glycine 135, glutamate 149, asparagine 164, and asparagine 221. Residue asparagine 221 coordinates Mg(2+). Residues 224-244 (FELSIAENFMQEKIKKYWMQQ) form a linker region. Positions 245 to 429 (GVIFHLPQST…KDYYYKKFQK (185 aa)) are N-acetyltransferase. 2 residues coordinate UDP-N-acetyl-alpha-D-glucosamine: arginine 308 and lysine 325. The active-site Proton acceptor is the histidine 336. Residues tyrosine 339 and asparagine 350 each coordinate UDP-N-acetyl-alpha-D-glucosamine. Acetyl-CoA is bound by residues 359-360 (NY), serine 378, alanine 396, and arginine 413.

In the N-terminal section; belongs to the N-acetylglucosamine-1-phosphate uridyltransferase family. The protein in the C-terminal section; belongs to the transferase hexapeptide repeat family. Homotrimer. The cofactor is Mg(2+).

It is found in the cytoplasm. The enzyme catalyses alpha-D-glucosamine 1-phosphate + acetyl-CoA = N-acetyl-alpha-D-glucosamine 1-phosphate + CoA + H(+). The catalysed reaction is N-acetyl-alpha-D-glucosamine 1-phosphate + UTP + H(+) = UDP-N-acetyl-alpha-D-glucosamine + diphosphate. The protein operates within nucleotide-sugar biosynthesis; UDP-N-acetyl-alpha-D-glucosamine biosynthesis; N-acetyl-alpha-D-glucosamine 1-phosphate from alpha-D-glucosamine 6-phosphate (route II): step 2/2. Its pathway is nucleotide-sugar biosynthesis; UDP-N-acetyl-alpha-D-glucosamine biosynthesis; UDP-N-acetyl-alpha-D-glucosamine from N-acetyl-alpha-D-glucosamine 1-phosphate: step 1/1. It functions in the pathway bacterial outer membrane biogenesis; LPS lipid A biosynthesis. Functionally, catalyzes the last two sequential reactions in the de novo biosynthetic pathway for UDP-N-acetylglucosamine (UDP-GlcNAc). The C-terminal domain catalyzes the transfer of acetyl group from acetyl coenzyme A to glucosamine-1-phosphate (GlcN-1-P) to produce N-acetylglucosamine-1-phosphate (GlcNAc-1-P), which is converted into UDP-GlcNAc by the transfer of uridine 5-monophosphate (from uridine 5-triphosphate), a reaction catalyzed by the N-terminal domain. This Campylobacter jejuni subsp. jejuni serotype O:6 (strain 81116 / NCTC 11828) protein is Bifunctional protein GlmU.